The sequence spans 351 residues: DNA polymerase IV (351 aa).

Residues 4 to 185 enclose the UmuC domain; that stretch reads IIHVDMDCFF…LPLAKIPGVG (182 aa). The Mg(2+) site is built by Asp-8 and Asp-103. Glu-104 is an active-site residue.

Belongs to the DNA polymerase type-Y family. As to quaternary structure, monomer. The cofactor is Mg(2+).

The protein resides in the cytoplasm. The catalysed reaction is DNA(n) + a 2'-deoxyribonucleoside 5'-triphosphate = DNA(n+1) + diphosphate. Functionally, poorly processive, error-prone DNA polymerase involved in untargeted mutagenesis. Copies undamaged DNA at stalled replication forks, which arise in vivo from mismatched or misaligned primer ends. These misaligned primers can be extended by PolIV. Exhibits no 3'-5' exonuclease (proofreading) activity. May be involved in translesional synthesis, in conjunction with the beta clamp from PolIII. This Escherichia coli (strain ATCC 8739 / DSM 1576 / NBRC 3972 / NCIMB 8545 / WDCM 00012 / Crooks) protein is DNA polymerase IV.